Here is a 262-residue protein sequence, read N- to C-terminus: Purine nucleoside phosphorylase SSP1584 (262 aa).

Zn(2+)-binding residues include histidine 79, cysteine 124, and histidine 141.

Belongs to the purine nucleoside phosphorylase YfiH/LACC1 family. As to quaternary structure, homodimer. The cofactor is Cu(2+). Zn(2+) is required as a cofactor.

The catalysed reaction is adenosine + phosphate = alpha-D-ribose 1-phosphate + adenine. It catalyses the reaction S-methyl-5'-thioadenosine + phosphate = 5-(methylsulfanyl)-alpha-D-ribose 1-phosphate + adenine. It carries out the reaction inosine + phosphate = alpha-D-ribose 1-phosphate + hypoxanthine. The enzyme catalyses adenosine + H2O + H(+) = inosine + NH4(+). Functionally, purine nucleoside enzyme that catalyzes the phosphorolysis of adenosine and inosine nucleosides, yielding D-ribose 1-phosphate and the respective free bases, adenine and hypoxanthine. Also catalyzes the phosphorolysis of S-methyl-5'-thioadenosine into adenine and S-methyl-5-thio-alpha-D-ribose 1-phosphate. Also has adenosine deaminase activity. This Staphylococcus saprophyticus subsp. saprophyticus (strain ATCC 15305 / DSM 20229 / NCIMB 8711 / NCTC 7292 / S-41) protein is Purine nucleoside phosphorylase SSP1584.